The chain runs to 104 residues: uncharacterized protein (104 aa).

The tract at residues 51-70 (NPGRSLDNNKDVSDKGRSEF) is disordered. The segment covering 57–70 (DNNKDVSDKGRSEF) has biased composition (basic and acidic residues).

This sequence belongs to the protein-tyrosine phosphatase family.

This is an uncharacterized protein from Xanthomonas campestris pv. campestris (strain ATCC 33913 / DSM 3586 / NCPPB 528 / LMG 568 / P 25).